The following is a 343-amino-acid chain: S-adenosylmethionine:tRNA ribosyltransferase-isomerase (343 aa).

Belongs to the QueA family. In terms of assembly, monomer.

The protein localises to the cytoplasm. The enzyme catalyses 7-aminomethyl-7-carbaguanosine(34) in tRNA + S-adenosyl-L-methionine = epoxyqueuosine(34) in tRNA + adenine + L-methionine + 2 H(+). Its pathway is tRNA modification; tRNA-queuosine biosynthesis. In terms of biological role, transfers and isomerizes the ribose moiety from AdoMet to the 7-aminomethyl group of 7-deazaguanine (preQ1-tRNA) to give epoxyqueuosine (oQ-tRNA). This chain is S-adenosylmethionine:tRNA ribosyltransferase-isomerase, found in Coxiella burnetii (strain Dugway 5J108-111).